A 471-amino-acid chain; its full sequence is Cytochrome b-c1 complex subunit 1, mitochondrial (471 aa).

Belongs to the peptidase M16 family.

It localises to the mitochondrion matrix. In Caenorhabditis elegans, this protein is Cytochrome b-c1 complex subunit 1, mitochondrial (ucr-1).